Reading from the N-terminus, the 195-residue chain is Chromophore lyase CpcT/CpeT 2 (195 aa).

It belongs to the CpcT/CpeT biliprotein lyase family.

In terms of biological role, covalently attaches a chromophore to Cys residue(s) of phycobiliproteins. In Trichodesmium erythraeum (strain IMS101), this protein is Chromophore lyase CpcT/CpeT 2.